The primary structure comprises 805 residues: Cell division cycle protein 48 homolog (805 aa).

ATP-binding positions include glycine 249 to threonine 256 and glycine 522 to threonine 529. Residues glycine 783 to serine 805 are disordered.

Belongs to the AAA ATPase family.

In terms of biological role, probably functions in cell division and growth processes. This chain is Cell division cycle protein 48 homolog (CAFP), found in Capsicum annuum (Capsicum pepper).